Consider the following 486-residue polypeptide: Ribulose bisphosphate carboxylase large chain (486 aa).

Residues asparagine 126 and threonine 176 each coordinate substrate. Lysine 178 serves as the catalytic Proton acceptor. Lysine 180 is a binding site for substrate. Residues lysine 204, aspartate 206, and glutamate 207 each contribute to the Mg(2+) site. Lysine 204 carries the N6-carboxylysine modification. Histidine 296 functions as the Proton acceptor in the catalytic mechanism. 3 residues coordinate substrate: arginine 297, histidine 329, and serine 381.

This sequence belongs to the RuBisCO large chain family. Type I subfamily. In terms of assembly, heterohexadecamer of 8 large chains and 8 small chains. Requires Mg(2+) as cofactor.

It carries out the reaction 2 (2R)-3-phosphoglycerate + 2 H(+) = D-ribulose 1,5-bisphosphate + CO2 + H2O. The enzyme catalyses D-ribulose 1,5-bisphosphate + O2 = 2-phosphoglycolate + (2R)-3-phosphoglycerate + 2 H(+). In terms of biological role, ruBisCO catalyzes two reactions: the carboxylation of D-ribulose 1,5-bisphosphate, the primary event in carbon dioxide fixation, as well as the oxidative fragmentation of the pentose substrate. Both reactions occur simultaneously and in competition at the same active site. The sequence is that of Ribulose bisphosphate carboxylase large chain from Sinorhizobium medicae (strain WSM419) (Ensifer medicae).